The sequence spans 121 residues: MARIAGIDIPSDKRVVIALTYIYGLGKKLSQKILNELNISHDIRVKNLTEQQLSSLRSEITKYSVEGDLRREVTLNIKRLMEIGVYRGLRHRKGLPVRGQKTRNNAHTVKGKPKSIAGKKK.

Residues 98–121 (RGQKTRNNAHTVKGKPKSIAGKKK) form a disordered region. Residues 109–121 (VKGKPKSIAGKKK) show a composition bias toward basic residues.

The protein belongs to the universal ribosomal protein uS13 family. As to quaternary structure, part of the 30S ribosomal subunit. Forms a loose heterodimer with protein S19. Forms two bridges to the 50S subunit in the 70S ribosome.

Its function is as follows. Located at the top of the head of the 30S subunit, it contacts several helices of the 16S rRNA. In the 70S ribosome it contacts the 23S rRNA (bridge B1a) and protein L5 of the 50S subunit (bridge B1b), connecting the 2 subunits; these bridges are implicated in subunit movement. Contacts the tRNAs in the A and P-sites. This Phytoplasma australiense protein is Small ribosomal subunit protein uS13.